The following is a 163-amino-acid chain: RNA pyrophosphohydrolase (163 aa).

The region spanning 6 to 149 (GYRLNVGIVI…KRDVYRQVMK (144 aa)) is the Nudix hydrolase domain. A Nudix box motif is present at residues 38-59 (GGIHLTESPEEAMYRELFEELG).

Belongs to the Nudix hydrolase family. RppH subfamily. Requires a divalent metal cation as cofactor.

Functionally, accelerates the degradation of transcripts by removing pyrophosphate from the 5'-end of triphosphorylated RNA, leading to a more labile monophosphorylated state that can stimulate subsequent ribonuclease cleavage. This chain is RNA pyrophosphohydrolase, found in Hamiltonella defensa subsp. Acyrthosiphon pisum (strain 5AT).